A 485-amino-acid chain; its full sequence is Glutamyl-tRNA(Gln) amidotransferase subunit A (485 aa).

Residues Lys79 and Ser154 each act as charge relay system in the active site. Residue Ser178 is the Acyl-ester intermediate of the active site.

It belongs to the amidase family. GatA subfamily. As to quaternary structure, heterotrimer of A, B and C subunits.

It carries out the reaction L-glutamyl-tRNA(Gln) + L-glutamine + ATP + H2O = L-glutaminyl-tRNA(Gln) + L-glutamate + ADP + phosphate + H(+). Allows the formation of correctly charged Gln-tRNA(Gln) through the transamidation of misacylated Glu-tRNA(Gln) in organisms which lack glutaminyl-tRNA synthetase. The reaction takes place in the presence of glutamine and ATP through an activated gamma-phospho-Glu-tRNA(Gln). This Staphylococcus aureus (strain bovine RF122 / ET3-1) protein is Glutamyl-tRNA(Gln) amidotransferase subunit A.